A 285-amino-acid chain; its full sequence is Non-homologous end joining protein Ku (285 aa).

The Ku domain occupies 9 to 176; the sequence is ISFGLVNVPV…PAEIRHLEAS (168 aa). The segment at 250 to 285 is disordered; that stretch reads AMTDQKKQQNTAESETEEKPTKSTLTPRGRRKVKGA.

This sequence belongs to the prokaryotic Ku family. In terms of assembly, homodimer. Interacts with LigD.

With LigD forms a non-homologous end joining (NHEJ) DNA repair enzyme, which repairs dsDNA breaks with reduced fidelity. Binds linear dsDNA with 5'- and 3'- overhangs but not closed circular dsDNA nor ssDNA. Recruits and stimulates the ligase activity of LigD. The chain is Non-homologous end joining protein Ku from Desulfitobacterium hafniense (strain DSM 10664 / DCB-2).